Here is a 266-residue protein sequence, read N- to C-terminus: Tryptophan synthase alpha chain (266 aa).

Catalysis depends on proton acceptor residues E50 and D61.

The protein belongs to the TrpA family. Tetramer of two alpha and two beta chains.

The catalysed reaction is (1S,2R)-1-C-(indol-3-yl)glycerol 3-phosphate + L-serine = D-glyceraldehyde 3-phosphate + L-tryptophan + H2O. The protein operates within amino-acid biosynthesis; L-tryptophan biosynthesis; L-tryptophan from chorismate: step 5/5. The alpha subunit is responsible for the aldol cleavage of indoleglycerol phosphate to indole and glyceraldehyde 3-phosphate. This is Tryptophan synthase alpha chain from Alkaliphilus metalliredigens (strain QYMF).